An 85-amino-acid chain; its full sequence is Large ribosomal subunit protein bL27 (85 aa).

A disordered region spans residues 1–24 (MAHKKGVGSSRNGRDSDGQRLGCK).

This sequence belongs to the bacterial ribosomal protein bL27 family.

The protein is Large ribosomal subunit protein bL27 of Geotalea daltonii (strain DSM 22248 / JCM 15807 / FRC-32) (Geobacter daltonii).